We begin with the raw amino-acid sequence, 233 residues long: Large ribosomal subunit protein uL1 (233 aa).

It belongs to the universal ribosomal protein uL1 family. In terms of assembly, part of the 50S ribosomal subunit.

Binds directly to 23S rRNA. The L1 stalk is quite mobile in the ribosome, and is involved in E site tRNA release. Functionally, protein L1 is also a translational repressor protein, it controls the translation of the L11 operon by binding to its mRNA. This Shewanella amazonensis (strain ATCC BAA-1098 / SB2B) protein is Large ribosomal subunit protein uL1.